A 211-amino-acid chain; its full sequence is tRNA (guanine-N(7)-)-methyltransferase (211 aa).

S-adenosyl-L-methionine contacts are provided by glutamate 44, aspartate 69, aspartate 96, and aspartate 118. Residue aspartate 118 is part of the active site. Lysine 122 provides a ligand contact to substrate. The tract at residues 124-129 is interaction with RNA; that stretch reads KHEKRR. Residues aspartate 154 and 191 to 194 each bind substrate; that span reads TEYE.

It belongs to the class I-like SAM-binding methyltransferase superfamily. TrmB family.

It carries out the reaction guanosine(46) in tRNA + S-adenosyl-L-methionine = N(7)-methylguanosine(46) in tRNA + S-adenosyl-L-homocysteine. The protein operates within tRNA modification; N(7)-methylguanine-tRNA biosynthesis. In terms of biological role, catalyzes the formation of N(7)-methylguanine at position 46 (m7G46) in tRNA. In Streptococcus pyogenes serotype M12 (strain MGAS2096), this protein is tRNA (guanine-N(7)-)-methyltransferase.